The chain runs to 799 residues: DNA ligase (799 aa).

A compositionally biased stretch (basic and acidic residues) spans Met-1–Asp-11. A disordered region spans residues Met-1–Ile-35. NAD(+) is bound by residues Asp-67 to Asp-71, Ser-116 to Leu-117, and Asp-147. Lys-149 functions as the N6-AMP-lysine intermediate in the catalytic mechanism. 4 residues coordinate NAD(+): Arg-170, Glu-207, Lys-327, and Lys-351. Zn(2+)-binding residues include Cys-445, Cys-448, Cys-463, and Cys-468. The BRCT domain maps to Ala-634–Val-723. The interval Ser-720–Phe-799 is disordered. The segment covering Gly-755–Ala-767 has biased composition (low complexity). Residues Asp-787–Phe-799 are compositionally biased toward basic and acidic residues.

This sequence belongs to the NAD-dependent DNA ligase family. LigA subfamily. It depends on Mg(2+) as a cofactor. Mn(2+) is required as a cofactor.

The enzyme catalyses NAD(+) + (deoxyribonucleotide)n-3'-hydroxyl + 5'-phospho-(deoxyribonucleotide)m = (deoxyribonucleotide)n+m + AMP + beta-nicotinamide D-nucleotide.. Its function is as follows. DNA ligase that catalyzes the formation of phosphodiester linkages between 5'-phosphoryl and 3'-hydroxyl groups in double-stranded DNA using NAD as a coenzyme and as the energy source for the reaction. It is essential for DNA replication and repair of damaged DNA. In Nitratidesulfovibrio vulgaris (strain ATCC 29579 / DSM 644 / CCUG 34227 / NCIMB 8303 / VKM B-1760 / Hildenborough) (Desulfovibrio vulgaris), this protein is DNA ligase.